Consider the following 427-residue polypeptide: MLDLKLIRQKPEWAKEKLAARAIKGEEIDELLALDTRRRQVTVQTEELKAKRNDVSGQIAVMKRNKENADDQIKAMREVGQKIAALDKELAQLNEKVTYILVRLPNFPADDVPMSLNEDDSREEYKWGNMPTFDFEPKHHWDIGEKLGILDFERAAKVAGSRFVYYKGAGARLERAVYNFFLDEHQKEGYEEIIPPYLVNNDSMFGTGQFPKFTDATYTITNDGEPLTLIPTAEVPLVNYYRNDIVDAEKLPVNFTALTPAFRSEAGSAGRDTRGLIRMHQFNKVEMVKFCKPEDSWKQLQNLIHDAEDLLQKLGLPYHVITLASNDASFTSAKTNDLEVWMPAQDRYREISSCSNCTDFQARRAQIRYRDDDGKLQFVHTLNGSGLAVGRTVASILENYQQADGSVKIPDVLVPYMQGQTAITKED.

Position 232 to 234 (232 to 234 (TAE)) interacts with L-serine. 263 to 265 (RSE) serves as a coordination point for ATP. Residue Glu286 participates in L-serine binding. 350–353 (EISS) is a binding site for ATP. Ser385 is a binding site for L-serine.

It belongs to the class-II aminoacyl-tRNA synthetase family. Type-1 seryl-tRNA synthetase subfamily. As to quaternary structure, homodimer. The tRNA molecule binds across the dimer.

It is found in the cytoplasm. It catalyses the reaction tRNA(Ser) + L-serine + ATP = L-seryl-tRNA(Ser) + AMP + diphosphate + H(+). The enzyme catalyses tRNA(Sec) + L-serine + ATP = L-seryl-tRNA(Sec) + AMP + diphosphate + H(+). It participates in aminoacyl-tRNA biosynthesis; selenocysteinyl-tRNA(Sec) biosynthesis; L-seryl-tRNA(Sec) from L-serine and tRNA(Sec): step 1/1. Its function is as follows. Catalyzes the attachment of serine to tRNA(Ser). Is also able to aminoacylate tRNA(Sec) with serine, to form the misacylated tRNA L-seryl-tRNA(Sec), which will be further converted into selenocysteinyl-tRNA(Sec). This Lacticaseibacillus casei (strain BL23) (Lactobacillus casei) protein is Serine--tRNA ligase.